Here is a 706-residue protein sequence, read N- to C-terminus: Termination factor NPH-I homolog (706 aa).

A Helicase ATP-binding domain is found at 62-227 (IGQGENTRGL…VPCFNMLSGR (166 aa)). 75–82 (HQMGMGKT) serves as a coordination point for ATP. The DEAH box motif lies at 168-171 (DEAH). A Helicase C-terminal domain is found at 417-599 (QCLQPLKVLE…HLNSAFRDLL (183 aa)).

Belongs to the DEAD box helicase family. DEAH subfamily. As to quaternary structure, part of the viral DNA-directed RNA polymerase that consists of 8 polII-like subunits (RPB1, RPB2, RPB3, RPB5, RPB6, RPB7, RPB9, RPB10), a capping enzyme and a termination factor.

Its subcellular location is the virion. In terms of biological role, putative DNA-dependent ATPase required for providing the needed energy to achieve the termination of early transcripts. The protein is Termination factor NPH-I homolog of African swine fever virus (isolate Tick/South Africa/Pretoriuskop Pr4/1996) (ASFV).